A 113-amino-acid polypeptide reads, in one-letter code: Flagellar hook-basal body complex protein FliE (113 aa).

Belongs to the FliE family.

The protein localises to the bacterial flagellum basal body. In Rhizobium leguminosarum bv. trifolii (strain WSM2304), this protein is Flagellar hook-basal body complex protein FliE.